A 329-amino-acid chain; its full sequence is GTP 3',8-cyclase (329 aa).

Residues 1–229 (MNQVDYLRIS…EGYVRGNGPA (229 aa)) enclose the Radical SAM core domain. GTP is bound at residue arginine 8. Positions 15 and 19 each coordinate [4Fe-4S] cluster. Tyrosine 21 provides a ligand contact to S-adenosyl-L-methionine. Cysteine 22 provides a ligand contact to [4Fe-4S] cluster. Position 60 (arginine 60) interacts with GTP. Glycine 64 is a binding site for S-adenosyl-L-methionine. Threonine 91 serves as a coordination point for GTP. Serine 115 contacts S-adenosyl-L-methionine. Lysine 155 lines the GTP pocket. Methionine 189 is an S-adenosyl-L-methionine binding site. The [4Fe-4S] cluster site is built by cysteine 252 and cysteine 255. 257-259 (RVR) contacts GTP. Cysteine 269 serves as a coordination point for [4Fe-4S] cluster.

Belongs to the radical SAM superfamily. MoaA family. As to quaternary structure, monomer and homodimer. It depends on [4Fe-4S] cluster as a cofactor.

It catalyses the reaction GTP + AH2 + S-adenosyl-L-methionine = (8S)-3',8-cyclo-7,8-dihydroguanosine 5'-triphosphate + 5'-deoxyadenosine + L-methionine + A + H(+). It functions in the pathway cofactor biosynthesis; molybdopterin biosynthesis. Functionally, catalyzes the cyclization of GTP to (8S)-3',8-cyclo-7,8-dihydroguanosine 5'-triphosphate. This Cyanothece sp. (strain PCC 7425 / ATCC 29141) protein is GTP 3',8-cyclase.